The primary structure comprises 727 residues: Cyclin-T1 (727 aa).

A Phosphoserine modification is found at Ser117. A Nuclear localization signal, and interaction with Tat-TAR RNA motif is present at residues 253–270; that stretch reads KRIRNWRACQAAKKTKAD. Low complexity predominate over residues 302–322; that stretch reads MSTSSTTSTVPSLPTTEESSS. Residues 302–326 form a disordered region; it reads MSTSSTTSTVPSLPTTEESSSNLSG. Residue Lys343 forms a Glycyl lysine isopeptide (Lys-Gly) (interchain with G-Cter in SUMO2) linkage. A coiled-coil region spans residues 386–427; the sequence is SAKVSLKEYRAKHAEELAAQKRQLENMEANVKSQYAYAAQNL. Ser390 bears the Phosphoserine mark. Lys392 carries the N6-acetyllysine modification. A Glycyl lysine isopeptide (Lys-Gly) (interchain with G-Cter in SUMO2) cross-link involves residue Lys417. Residues Ser418, Ser476, and Ser477 each carry the ADP-ribosylserine modification. Residues 482 to 552 form a histidine-rich domain (HRD) region; it reads IKMRIKVHAA…RPGDPKHSSQ (71 aa). A Glycyl lysine isopeptide (Lys-Gly) (interchain with G-Cter in SUMO2) cross-link involves residue Lys483. Over residues 486–508 the composition is skewed to basic and acidic residues; sequence IKVHAAPDKHNSIDDSVTKSREH. Disordered stretches follow at residues 486–591 and 692–727; these read IKVH…DHPA and LNPRAGGMPSRSGNTDKPRLPPLPSEPPPPLPPLPK. The residue at position 487 (Lys487) is an N6-(ADP-ribosyl)lysine. His489 bears the ADP-ribosylhistidine mark. 2 positions are modified to phosphoserine: Ser497 and Ser501. A compositionally biased stretch (basic residues) spans 509–532; that stretch reads KEKHKTHPSNHHHHHNHHSHKHSH. His532 bears the ADP-ribosylhistidine mark. 3 positions are modified to ADP-ribosylserine: Ser533, Ser551, and Ser554. His558 carries the post-translational modification ADP-ribosylhistidine. Over residues 562–572 the composition is skewed to low complexity; it reads SLSSSFSSSSS. ADP-ribosylserine is present on Ser565. Ser566 carries the post-translational modification Phosphoserine. Residues 711 to 727 are compositionally biased toward pro residues; that stretch reads LPPLPSEPPPPLPPLPK.

Belongs to the cyclin family. Cyclin C subfamily. As to quaternary structure, cyclin-T1 is the predominant cyclin that associates with CDK9 to form a heterodimer called P-TEFb. P-TEFb forms a complex with AFF4/AF5Q31. Component of a complex which is at least composed of HTATSF1/Tat-SF1, P-TEFb complex, RNA pol II, SUPT5H, and NCL/nucleolin. Component of the 7SK snRNP complex at least composed of P-TEFb (composed of CDK9 and CCNT1/cyclin-T1), HEXIM1, HEXIM2, BCDIN3, SART3 proteins and 7SK and U6 snRNAs. Interacts (via central region) with ZMYND8 (via N-terminus); the interaction is direct and the association appears to occur between homodimeric ZMYND8 and the activated form of the P-TEFb complex. Interacts with BRD4, targets chromatin binding. Interacts with JMJD6. Interacts with MDFIC. Interacts with HSF1. Interacts with HTATSF1. Interacts with TBX21. Post-translationally, ADP-ribosylation on serine residues by PARP1 in response to DNA damage disrupts the phase separation activity of CCNT1, thereby preventing activation of CDK9.

It is found in the nucleus. Regulatory subunit of the cyclin-dependent kinase pair (CDK9/cyclin-T1) complex, also called positive transcription elongation factor B (P-TEFb), which facilitates the transition from abortive to productive elongation by phosphorylating the CTD (C-terminal domain) of the large subunit of RNA polymerase II (RNA Pol II). Required to activate the protein kinase activity of CDK9: acts by mediating formation of liquid-liquid phase separation (LLPS) that enhances binding of P-TEFb to the CTD of RNA Pol II. This Equus caballus (Horse) protein is Cyclin-T1 (CCNT1).